The sequence spans 2249 residues: Endoribonuclease Dcr-1 (2249 aa).

An essential for miRNA substrate recognition region spans residues 1 to 371 (MAFHWCDNNL…SPKVRRLLQT (371 aa)). An important for interaction with loqs isoform PB (loqs-PB) region spans residues 1-690 (MAFHWCDNNL…SKQPPTACDI (690 aa)). Positions 1 to 761 (MAFHWCDNNL…AEIDTAHSLA (761 aa)) are helicase domain. The tract at residues 1-1042 (MAFHWCDNNL…VSLELAKERV (1042 aa)) is necessary for processing certain pre-miRNas, such as pre-let 7 and pre-bantam. 37–44 (LGHRSSKE) serves as a coordination point for ATP. Residues 371–491 (TLRCFKPEEV…HHRDHNDGSD (121 aa)) form a dispensable for activity and substrate recognition region. The tract at residues 436–486 (TTEDRQTNRSAARVTPTPTPAHAKPKPSSGANTAQPRTRRRVYTRRHHRDH) is disordered. Positions 472–484 (RTRRRVYTRRHHR) are enriched in basic residues. In terms of domain architecture, Helicase C-terminal spans 485 to 648 (DHNDGSDTLC…TGDTTEADSD (164 aa)). The interval 496 to 606 (LIYCNQNHTA…VQCKGRARAA (111 aa)) is essential for miRNA substrate recognition. The interval 617–761 (SYKSPTVGSV…AEIDTAHSLA (145 aa)) is dispensable for activity and substrate recognition. Disordered stretches follow at residues 640 to 665 (GDTTEADSDSDDSAMPNSSGSDPYTF) and 705 to 757 (LDTS…IDTA). The segment covering 716–726 (SMSNTSPSESS) has biased composition (low complexity). The 96-residue stretch at 825-920 (AIALVNKYCA…QPIGKEGFRA (96 aa)) folds into the Dicer dsRNA-binding fold domain. A wing domain region spans residues 924 to 957 (DWECFELEPEDEQIVQLSDEPRPGTTKRRQYYYK). The tract at residues 963–1108 (FCDCRPVAGA…WQFLELIQAN (146 aa)) is platform domain. The 147-residue stretch at 1100 to 1246 (QFLELIQANG…LVPELCTVHP (147 aa)) folds into the PAZ domain. The tract at residues 1147 to 2249 (QYFYVAEICP…KKQGLIAKKD (1103 aa)) is essential for production of mature miRNAs from pre-miRNAs. Also important for proper formation of the siRISC complex but is dispensable for biogenesis of siRNAs. A disordered region spans residues 1314–1351 (ESKQKESLKDDTINGKDLADVEKKPTSEETQLDKDSKD). Residue Ser1423 is modified to Phosphoserine. The segment at 1426 to 1477 (FWDVSNGESGFKGPKSSQNKQGGKGKAKGPAKPTFNYYDSDNSLGSSYDDDD) is disordered. The span at 1437-1446 (KGPKSSQNKQ) shows a compositional bias: low complexity. Residues 1462–1471 (YYDSDNSLGS) show a composition bias toward polar residues. 2 consecutive RNase III domains span residues 1698-1919 (ITSA…IECG) and 1993-2150 (FEEF…LDSN). Mg(2+) is bound by residues Glu1745 and Asp1749. Residues Ser1877 and Ser1880 each carry the phosphoserine modification. Asp1905, Glu1908, Glu2032, Asp2136, and Glu2139 together coordinate Mg(2+). In terms of domain architecture, DRBM spans 2175 to 2241 (VPKSPIRELL…AKCALRQLKK (67 aa)).

Belongs to the helicase family. Dicer subfamily. Component of the miRNA-directed RISC loading complex (miRLC), composed of at least Dcr-1, AGO1 and loqs, which processes pre-miRNAs and loads the resulting miRNAs into the Argonaute 1 (AGO1)-containing RNA-induced silencing complex (miRISC). Interacts (via helicase domain) with dicing cofactor loqs isoform-PB (loqs-PB) (via DRBM 3 domain); this interaction enhances processing of pre-miRNAs by increasing substrate binding affinity of the dicer. Also able to interact with loqs isoforms PA and PC, however the relevance of such interactions are unclear in vivo. Different regions of the Dcr-1-loqs-PB heterodimer collaborate to recognize, bind and position the pre-miRNA for Dcr-1 mediated cleavage. In the absence of authentic miRNA substrates, the heterodimer favors a closed, catalytically incompetent, conformation, whereas binding of authentic pre-miRNA substrates stabilizes the relatively rare open, catalytically competent, conformation of the heterodimer. During substrate recognition, the Dcr-1 PAZ domain and pre-miRNA interact with the DRBM 1 domain of loqs-PB, which likely contributes to substrate recognition and stabilization. At the miRNA binding stage, the Dcr-1 DRBM domain and loqs-PB DRBM domains then bind the pre-miRNA in tandem to form a tight 'belt' around the pre-miRNA stem, the pre-miRNA loop is docked in the loop-binding region formed by DUF283, DRBM and part of the N terminus of Dcr-1, and the loqs-PB DRBM 1 and the wing domain of Dcr-1 act together to bind the 5' and 3' pre-miRNA termini within the PAZ and platform domains of Dcr-1. These interactions between the proteins and their pre-miRNA substrate stabilize a distorted form of the pre-miRNA and position the scissile phosphodiester bonds of the pre-miRNA at the RNase III catalytic cleavage sites of Dcr-1. Following Dcr-1 mediated cleavage, the miRNA duplex remains bound to loqs-PB DRBM 1, which dissociates from the Dcr-1 RNase III 1 domain but remains in contact with the PAZ and wing domains, suggesting that the heterodimer presents the mature miRNA to Ago2 for loading into the RNA-induced silencing complex (miRISC). Interacts with AGO2 and Fmr1 to form a RNA-induced silencing complex (siRISC), a ribonucleoprotein (RNP) complex involved in translation regulation; other components of the complex are RpL5, RpL11, AGO2 and Rm62. Interacts with piwi and vas; these interactions occur in the polar granules. Mg(2+) is required as a cofactor. Requires Mn(2+) as cofactor.

Its subcellular location is the cytoplasm. It is found in the cytosol. It catalyses the reaction Endonucleolytic cleavage to 5'-phosphomonoester.. Its activity is regulated as follows. Activity towards pre-miRNAs is not inhibited by inorganic phosphate. Functionally, endoribonuclease which functions in microRNA- (miRNA) gene silencing and, independently of its ribonuclease III activity, also acts in the short interfering RNA- (siRNA) gene silencing pathway. Cleaves hairpin precursor miRNAs (pre-miRNA) to generate mature miRNAs (miRNAs) that are between twenty-one to twenty-four nucleotides in length and function in RNA silencing and post-transcriptional regulation of gene expression. Also functions in miRNA loading and assembly of the Argonaute 1 (AGO1)-containing RNA-induced silencing complex (miRISC), with the miRNAs serving as a guide to direct the miRISC to complementary RNAs to degrade them or prevent their translation. Independently of its catalytic activity, functions in the siRNA silencing pathway by promoting assembly of the siRNA-directed Argonaute 2 (AGO2)-containing RISC (siRISC). Required for the proper formation of a stable intermediate (R2) in siRISC assembly, which is formed from the R1 precursor complex (containing Dcr-2, R2D2 and the siRNA) and is used for assembly of the mature (R3) siRISC complex. It is not required for siRNA biogenesis. During embryogenesis, involved in germline fate determination. Post-transcriptionally regulates mei-P26 expression through the microRNA pathway, which in turn post-translationally regulates myc protein levels; involved in regulating cell and tissue growth. The chain is Endoribonuclease Dcr-1 from Drosophila melanogaster (Fruit fly).